The following is a 492-amino-acid chain: Catalase isozyme 1 (492 aa).

Residues histidine 65 and asparagine 138 contribute to the active site. Residue tyrosine 348 participates in heme binding.

It belongs to the catalase family. In terms of assembly, homotetramer. Heme serves as cofactor. Scutella, milky endosperm of immature kernels, leaves and epicotyls.

Its subcellular location is the peroxisome. It catalyses the reaction 2 H2O2 = O2 + 2 H2O. Functionally, occurs in almost all aerobically respiring organisms and serves to protect cells from the toxic effects of hydrogen peroxide. This chain is Catalase isozyme 1 (CAT1), found in Zea mays (Maize).